Reading from the N-terminus, the 612-residue chain is Zinc metalloproteinase-disintegrin-like 2a (612 aa).

The N-terminal stretch at 1-20 is a signal peptide; sequence MIQVLLVTICLAVFPYQGSS. Positions 21–189 are excised as a propeptide; sequence IILGSGNVND…KKASQLNLTP (169 aa). Positions 199–395 constitute a Peptidase M12B domain; it reads KYIELVIVAD…NRPPCILNKP (197 aa). Position 202 (glutamate 202) interacts with Ca(2+). A glycan (N-linked (GlcNAc...) asparagine) is linked at asparagine 218. Aspartate 286 contributes to the Ca(2+) binding site. Disulfide bonds link cysteine 310–cysteine 390, cysteine 350–cysteine 374, and cysteine 352–cysteine 357. Histidine 335 is a Zn(2+) binding site. Glutamate 336 is a catalytic residue. Zn(2+) contacts are provided by histidine 339 and histidine 345. Ca(2+) contacts are provided by cysteine 390, asparagine 393, valine 405, asparagine 408, phenylalanine 410, glutamate 412, glutamate 415, and aspartate 418. The Disintegrin domain maps to 403 to 489; sequence PPVCGNYFVE…DCPTDNFQRN (87 aa). Cystine bridges form between cysteine 406–cysteine 435, cysteine 417–cysteine 430, cysteine 419–cysteine 425, cysteine 429–cysteine 452, cysteine 443–cysteine 449, cysteine 448–cysteine 474, cysteine 461–cysteine 481, cysteine 468–cysteine 500, cysteine 493–cysteine 505, cysteine 512–cysteine 562, cysteine 527–cysteine 573, cysteine 540–cysteine 550, cysteine 557–cysteine 599, and cysteine 593–cysteine 605. The D/ECD-tripeptide signature appears at 467-469; sequence ECD.

It belongs to the venom metalloproteinase (M12B) family. P-III subfamily. The cofactor is Zn(2+). Expressed by the venom gland.

The protein resides in the secreted. Functionally, snake venom metalloproteinase that impairs hemostasis in the envenomed animal. The chain is Zinc metalloproteinase-disintegrin-like 2a from Crotalus adamanteus (Eastern diamondback rattlesnake).